The primary structure comprises 285 residues: ATP synthase gamma chain (285 aa).

It belongs to the ATPase gamma chain family. As to quaternary structure, F-type ATPases have 2 components, CF(1) - the catalytic core - and CF(0) - the membrane proton channel. CF(1) has five subunits: alpha(3), beta(3), gamma(1), delta(1), epsilon(1). CF(0) has three main subunits: a, b and c.

The protein resides in the cell membrane. Functionally, produces ATP from ADP in the presence of a proton gradient across the membrane. The gamma chain is believed to be important in regulating ATPase activity and the flow of protons through the CF(0) complex. This is ATP synthase gamma chain from Dehalococcoides mccartyi (strain ATCC BAA-2266 / KCTC 15142 / 195) (Dehalococcoides ethenogenes (strain 195)).